Consider the following 173-residue polypeptide: DASH complex subunit SPC19 (173 aa).

Belongs to the DASH complex SPC19 family. As to quaternary structure, component of the DASH complex consisting of ASK1, DAD1, DAD2, DAD3, DAD4, DAM1, DUO1, HSK3, SPC19 and SPC34, with a stoichiometry of one copy of each subunit per complex. Multiple DASH complexes oligomerize to form a ring that encircles spindle microtubules and organizes the rod-like NDC80 complexes of the outer kinetochore. DASH complex oligomerization strengthens microtubule attachments. On cytoplasmic microtubules, DASH complexes appear to form patches instead of rings.

The protein resides in the nucleus. The protein localises to the cytoplasm. It is found in the cytoskeleton. It localises to the spindle. Its subcellular location is the chromosome. The protein resides in the centromere. The protein localises to the kinetochore. Component of the DASH complex that connects microtubules with kinetochores and couples microtubule depolymerisation to chromosome movement; it is involved in retrieving kinetochores to the spindle poles before their re-orientation on the spindle in early mitosis and allows microtubule depolymerization to pull chromosomes apart and resist detachment during anaphase. Kinetochores, consisting of a centromere-associated inner segment and a microtubule-contacting outer segment, play a crucial role in chromosome segregation by mediating the physical connection between centromeric DNA and microtubules. Kinetochores also serve as an input point for the spindle assembly checkpoint, which delays anaphase until all chromosomes have bioriented on the mitotic spindle. The polypeptide is DASH complex subunit SPC19 (Chaetomium thermophilum (strain DSM 1495 / CBS 144.50 / IMI 039719) (Thermochaetoides thermophila)).